A 380-amino-acid chain; its full sequence is DNA replication and repair protein RecF (380 aa).

30 to 37 (GENAQGKT) is a binding site for ATP.

This sequence belongs to the RecF family.

The protein resides in the cytoplasm. Its function is as follows. The RecF protein is involved in DNA metabolism; it is required for DNA replication and normal SOS inducibility. RecF binds preferentially to single-stranded, linear DNA. It also seems to bind ATP. The sequence is that of DNA replication and repair protein RecF from Synechococcus sp. (strain JA-2-3B'a(2-13)) (Cyanobacteria bacterium Yellowstone B-Prime).